Here is a 375-residue protein sequence, read N- to C-terminus: MSEQQTCVIDNGSGVVKAGFSGEDAPRAVYPSIVGRPKNVSALIGVDSASEYLGDEAQQKRGVLKIFYPIEHGIVKDWDDMEKIWNHTFYVELRVSPDEHPVLLTEAPLNPKVNREKMTQIMFETFNVPALYVAIQAVLSLYSAGRTTGIVCDAGDGVTHTVPIYEGFSIPHAVSRIQLAGRDLTTFMAKLLTERGYSFTSSAELEIVRDIKEKLCFVALDYEAALKQSHDSSTFEKNYELPDGKIITIGSERFRCPEYLFKPLEMNGKELDSIQDLTYKSIQECDVDVRRDLYQTIILSGGSTSIEGIGERLLKEIENRAPKSINVKVIASPDRRFAVWRGGSTLTSLSTFASMWITKEDYDENGASIVHRKCI.

This sequence belongs to the actin family.

The protein localises to the cytoplasm. It is found in the cytoskeleton. It carries out the reaction ATP + H2O = ADP + phosphate + H(+). Its function is as follows. Actins are highly conserved proteins that are involved in various types of cell motility and are ubiquitously expressed in all eukaryotic cells. The polypeptide is Actin (Sterkiella cavicola (Ciliate)).